The following is a 789-amino-acid chain: SWI5-dependent HO expression protein 4 (789 aa).

The residue at position 18 (serine 18) is a Phosphoserine.

Its subcellular location is the cytoplasm. Its function is as follows. Required for mother cell-specific ho expression. Might be required for the transport of factors (such as ASH1) that promote HO repression from the mother cell into its bud. This is SWI5-dependent HO expression protein 4 (SHE4) from Saccharomyces cerevisiae (strain ATCC 204508 / S288c) (Baker's yeast).